We begin with the raw amino-acid sequence, 532 residues long: Neutral amino acid transporter A (532 aa).

Methionine 1 carries the N-acetylmethionine modification. The tract at residues 1–29 (MEKSGETNGYLDGTQAEPAAGPRTPETAM) is disordered. Residues 1–41 (MEKSGETNGYLDGTQAEPAAGPRTPETAMGKSQRCASFFRR) are Cytoplasmic-facing. Transmembrane regions (helical) follow at residues 42–62 (HALVLLTVSGVLVGAGMGAAL), 88–108 (MIILPLVVCSLVSGAASLDAS), and 119–139 (AYFGLTTLSASALAVALAFII). At 140–216 (KPGAGAQTLQ…VTKEKIPVVT (77 aa)) the chain is on the extracellular side. N-linked (GlcNAc...) asparagine glycans are attached at residues asparagine 201 and asparagine 206. 6 helical membrane-spanning segments follow: residues 217–237 (DVEGMNILGLVLFALVLGVAL), 257–277 (ATMVLVSWIMWYVPIGIMFLI), 298–318 (IFASMLGHVIHGGIVLPLVYF), 328–348 (FLLGLLTPFATAFATCSSSAT), 373–393 (IGATVNMDGAAIFQCVAAVFI), and 418–438 (VGAAGVPAGGVLTIAIILEAI). Residues 495–532 (EAIPNSKSEEETSPLVTHQNPAGPVAIAPELESKESVL) are disordered. Serine 507, serine 527, and serine 530 each carry phosphoserine.

It belongs to the dicarboxylate/amino acid:cation symporter (DAACS) (TC 2.A.23) family. SLC1A4 subfamily.

It is found in the membrane. The protein resides in the melanosome. The enzyme catalyses L-threonine(in) + Na(+)(in) = L-threonine(out) + Na(+)(out). It carries out the reaction L-serine(in) + Na(+)(in) = L-serine(out) + Na(+)(out). The catalysed reaction is L-cysteine(in) + Na(+)(in) = L-cysteine(out) + Na(+)(out). It catalyses the reaction L-alanine(in) + Na(+)(in) = L-alanine(out) + Na(+)(out). The enzyme catalyses L-proline(in) + Na(+)(in) = L-proline(out) + Na(+)(out). It carries out the reaction 4-hydroxy-L-proline(in) + Na(+)(in) = 4-hydroxy-L-proline(out) + Na(+)(out). Functionally, sodium-dependent neutral amino-acid transporter that mediates transport of alanine, serine, cysteine, proline, hydroxyproline and threonine. This chain is Neutral amino acid transporter A (Slc1a4), found in Mus musculus (Mouse).